Here is a 375-residue protein sequence, read N- to C-terminus: Succinyl-diaminopimelate desuccinylase (375 aa).

Histidine 66 lines the Zn(2+) pocket. Aspartate 68 is a catalytic residue. Residue aspartate 99 coordinates Zn(2+). Glutamate 133 serves as the catalytic Proton acceptor. Glutamate 134, glutamate 162, and histidine 348 together coordinate Zn(2+).

This sequence belongs to the peptidase M20A family. DapE subfamily. In terms of assembly, homodimer. Zn(2+) serves as cofactor. Requires Co(2+) as cofactor.

The enzyme catalyses N-succinyl-(2S,6S)-2,6-diaminopimelate + H2O = (2S,6S)-2,6-diaminopimelate + succinate. Its pathway is amino-acid biosynthesis; L-lysine biosynthesis via DAP pathway; LL-2,6-diaminopimelate from (S)-tetrahydrodipicolinate (succinylase route): step 3/3. Functionally, catalyzes the hydrolysis of N-succinyl-L,L-diaminopimelic acid (SDAP), forming succinate and LL-2,6-diaminopimelate (DAP), an intermediate involved in the bacterial biosynthesis of lysine and meso-diaminopimelic acid, an essential component of bacterial cell walls. In Shigella dysenteriae serotype 1 (strain Sd197), this protein is Succinyl-diaminopimelate desuccinylase.